Reading from the N-terminus, the 85-residue chain is Large ribosomal subunit protein bL27 (85 aa).

The interval 1–21 (MAHKKAGGSTRNGRDSNAQRL) is disordered. Residues 9–19 (STRNGRDSNAQ) show a composition bias toward polar residues.

Belongs to the bacterial ribosomal protein bL27 family.

This is Large ribosomal subunit protein bL27 from Pectobacterium atrosepticum (strain SCRI 1043 / ATCC BAA-672) (Erwinia carotovora subsp. atroseptica).